We begin with the raw amino-acid sequence, 466 residues long: Argininosuccinate lyase (466 aa).

It belongs to the lyase 1 family. Argininosuccinate lyase subfamily.

It is found in the cytoplasm. It catalyses the reaction 2-(N(omega)-L-arginino)succinate = fumarate + L-arginine. It functions in the pathway amino-acid biosynthesis; L-arginine biosynthesis; L-arginine from L-ornithine and carbamoyl phosphate: step 3/3. This Roseobacter denitrificans (strain ATCC 33942 / OCh 114) (Erythrobacter sp. (strain OCh 114)) protein is Argininosuccinate lyase.